Consider the following 651-residue polypeptide: Chaperone protein HtpG (651 aa).

The a; substrate-binding stretch occupies residues 1-353; it reads MAAHVEQLEF…AQDMSLNVSR (353 aa). Positions 354 to 569 are b; it reads EILQQDRQIR…TFGITPALAR (216 aa). The c stretch occupies residues 570–651; the sequence is MYRASGQPVP…RLTRTVGDQT (82 aa).

The protein belongs to the heat shock protein 90 family. Homodimer.

The protein localises to the cytoplasm. In terms of biological role, molecular chaperone. Has ATPase activity. This chain is Chaperone protein HtpG, found in Mycolicibacterium vanbaalenii (strain DSM 7251 / JCM 13017 / BCRC 16820 / KCTC 9966 / NRRL B-24157 / PYR-1) (Mycobacterium vanbaalenii).